The primary structure comprises 316 residues: L-lactate dehydrogenase 1 (316 aa).

Residues Val17, Asp38, Lys43, and Tyr69 each coordinate NAD(+). Residues Arg92 and 124 to 127 (NPVD) contribute to the substrate site. NAD(+) contacts are provided by residues 122–124 (VSN) and Thr147. 152–155 (DTSR) provides a ligand contact to substrate. Residue His179 is the Proton acceptor of the active site. Position 234 (Thr234) interacts with substrate.

The protein belongs to the LDH/MDH superfamily. LDH family. Homotetramer.

It is found in the cytoplasm. It carries out the reaction (S)-lactate + NAD(+) = pyruvate + NADH + H(+). The protein operates within fermentation; pyruvate fermentation to lactate; (S)-lactate from pyruvate: step 1/1. In terms of biological role, catalyzes the conversion of lactate to pyruvate. The protein is L-lactate dehydrogenase 1 of Bifidobacterium longum subsp. longum (strain ATCC 15707 / DSM 20219 / JCM 1217 / NCTC 11818 / E194b).